Here is a 729-residue protein sequence, read N- to C-terminus: Phosphoribosylformylglycinamidine synthase subunit PurL (729 aa).

His-54 is an active-site residue. ATP-binding residues include Tyr-57 and Lys-96. Glu-98 contributes to the Mg(2+) binding site. Substrate-binding positions include 99-102 (SHNH) and Arg-121. The Proton acceptor role is filled by His-100. Position 122 (Asp-122) interacts with Mg(2+). Gln-245 lines the substrate pocket. Asp-273 is a binding site for Mg(2+). A substrate-binding site is contributed by 317–319 (ETQ). 2 residues coordinate ATP: Asp-495 and Gly-532. Asn-533 contributes to the Mg(2+) binding site. Residue Ser-535 coordinates substrate.

This sequence belongs to the FGAMS family. As to quaternary structure, monomer. Part of the FGAM synthase complex composed of 1 PurL, 1 PurQ and 2 PurS subunits.

It localises to the cytoplasm. The enzyme catalyses N(2)-formyl-N(1)-(5-phospho-beta-D-ribosyl)glycinamide + L-glutamine + ATP + H2O = 2-formamido-N(1)-(5-O-phospho-beta-D-ribosyl)acetamidine + L-glutamate + ADP + phosphate + H(+). It participates in purine metabolism; IMP biosynthesis via de novo pathway; 5-amino-1-(5-phospho-D-ribosyl)imidazole from N(2)-formyl-N(1)-(5-phospho-D-ribosyl)glycinamide: step 1/2. In terms of biological role, part of the phosphoribosylformylglycinamidine synthase complex involved in the purines biosynthetic pathway. Catalyzes the ATP-dependent conversion of formylglycinamide ribonucleotide (FGAR) and glutamine to yield formylglycinamidine ribonucleotide (FGAM) and glutamate. The FGAM synthase complex is composed of three subunits. PurQ produces an ammonia molecule by converting glutamine to glutamate. PurL transfers the ammonia molecule to FGAR to form FGAM in an ATP-dependent manner. PurS interacts with PurQ and PurL and is thought to assist in the transfer of the ammonia molecule from PurQ to PurL. The chain is Phosphoribosylformylglycinamidine synthase subunit PurL from Staphylococcus carnosus (strain TM300).